Consider the following 370-residue polypeptide: tRNA-specific 2-thiouridylase MnmA (370 aa).

Residues 12 to 19 (GMSGGVDS) and L38 contribute to the ATP site. C105 (nucleophile) is an active-site residue. C105 and C204 are joined by a disulfide. G129 serves as a coordination point for ATP. The interaction with tRNA stretch occupies residues 153 to 155 (KDQ). Residue C204 is the Cysteine persulfide intermediate of the active site. Residues 310–311 (RY) are interaction with tRNA.

The protein belongs to the MnmA/TRMU family.

It is found in the cytoplasm. The enzyme catalyses S-sulfanyl-L-cysteinyl-[protein] + uridine(34) in tRNA + AH2 + ATP = 2-thiouridine(34) in tRNA + L-cysteinyl-[protein] + A + AMP + diphosphate + H(+). Catalyzes the 2-thiolation of uridine at the wobble position (U34) of tRNA, leading to the formation of s(2)U34. This chain is tRNA-specific 2-thiouridylase MnmA, found in Desulfitobacterium hafniense (strain Y51).